The primary structure comprises 303 residues: Cell division protein ZipA (303 aa).

Over 1–6 (MMQDLR) the chain is Periplasmic. A helical membrane pass occupies residues 7–27 (LILIIVGAIAIIALLLHGLWT). The Cytoplasmic segment spans residues 28 to 303 (SRKERSSLFR…RIRSTLGVQV (276 aa)). 3 disordered regions span residues 39–61 (RPVK…DEAF), 66–85 (KPYA…EPAI), and 124–159 (EQEP…GEKE). 2 stretches are compositionally biased toward basic and acidic residues: residues 75–85 (SHQEYKAEPAI) and 139–159 (ESER…GEKE).

Belongs to the ZipA family. Interacts with FtsZ via their C-terminal domains.

The protein resides in the cell inner membrane. Essential cell division protein that stabilizes the FtsZ protofilaments by cross-linking them and that serves as a cytoplasmic membrane anchor for the Z ring. Also required for the recruitment to the septal ring of downstream cell division proteins. The chain is Cell division protein ZipA from Photorhabdus laumondii subsp. laumondii (strain DSM 15139 / CIP 105565 / TT01) (Photorhabdus luminescens subsp. laumondii).